The chain runs to 190 residues: Large ribosomal subunit protein uL10 (190 aa).

The protein belongs to the universal ribosomal protein uL10 family. In terms of assembly, part of the ribosomal stalk of the 50S ribosomal subunit. The N-terminus interacts with L11 and the large rRNA to form the base of the stalk. The C-terminus forms an elongated spine to which L12 dimers bind in a sequential fashion forming a multimeric L10(L12)X complex.

Forms part of the ribosomal stalk, playing a central role in the interaction of the ribosome with GTP-bound translation factors. The protein is Large ribosomal subunit protein uL10 of Trichodesmium erythraeum (strain IMS101).